The primary structure comprises 530 residues: Bifunctional purine biosynthesis protein PurH (530 aa).

In terms of domain architecture, MGS-like spans 1–148 (MNNARPIHRA…KNHKDVAIVV (148 aa)).

It belongs to the PurH family.

The catalysed reaction is (6R)-10-formyltetrahydrofolate + 5-amino-1-(5-phospho-beta-D-ribosyl)imidazole-4-carboxamide = 5-formamido-1-(5-phospho-D-ribosyl)imidazole-4-carboxamide + (6S)-5,6,7,8-tetrahydrofolate. It catalyses the reaction IMP + H2O = 5-formamido-1-(5-phospho-D-ribosyl)imidazole-4-carboxamide. The protein operates within purine metabolism; IMP biosynthesis via de novo pathway; 5-formamido-1-(5-phospho-D-ribosyl)imidazole-4-carboxamide from 5-amino-1-(5-phospho-D-ribosyl)imidazole-4-carboxamide (10-formyl THF route): step 1/1. It participates in purine metabolism; IMP biosynthesis via de novo pathway; IMP from 5-formamido-1-(5-phospho-D-ribosyl)imidazole-4-carboxamide: step 1/1. The protein is Bifunctional purine biosynthesis protein PurH of Vibrio cholerae serotype O1 (strain M66-2).